A 232-amino-acid polypeptide reads, in one-letter code: 7-cyano-7-deazaguanine synthase (232 aa).

Phe-8–Leu-18 serves as a coordination point for ATP. Cys-189, Cys-198, Cys-201, and Cys-204 together coordinate Zn(2+).

The protein belongs to the QueC family. The cofactor is Zn(2+).

The catalysed reaction is 7-carboxy-7-deazaguanine + NH4(+) + ATP = 7-cyano-7-deazaguanine + ADP + phosphate + H2O + H(+). Its pathway is purine metabolism; 7-cyano-7-deazaguanine biosynthesis. Its function is as follows. Catalyzes the ATP-dependent conversion of 7-carboxy-7-deazaguanine (CDG) to 7-cyano-7-deazaguanine (preQ(0)). The sequence is that of 7-cyano-7-deazaguanine synthase from Serratia proteamaculans (strain 568).